The sequence spans 43 residues: Cuticle protein CP434 (43 aa).

Repeat copies occupy residues 1-18 (ALVGPSGMILADGTPVQF) and 25-42 (VLTGPSGIVFSNGQNIQL).

In terms of tissue distribution, calcified shell.

This is Cuticle protein CP434 from Cancer pagurus (Rock crab).